Here is a 226-residue protein sequence, read N- to C-terminus: ATP synthase F(0) complex subunit a (226 aa).

A run of 6 helical transmembrane segments spans residues 12–32 (PTMM…ILFP), 68–88 (WALM…LGLL), 97–117 (QLSM…ITGF), 138–158 (IPML…ALAV), 164–184 (ITAG…LMDI), and 189–209 (AFIT…VALI).

The protein belongs to the ATPase A chain family. Component of the ATP synthase complex composed at least of ATP5F1A/subunit alpha, ATP5F1B/subunit beta, ATP5MC1/subunit c (homooctomer), MT-ATP6/subunit a, MT-ATP8/subunit 8, ATP5ME/subunit e, ATP5MF/subunit f, ATP5MG/subunit g, ATP5MK/subunit k, ATP5MJ/subunit j, ATP5F1C/subunit gamma, ATP5F1D/subunit delta, ATP5F1E/subunit epsilon, ATP5PF/subunit F6, ATP5PB/subunit b, ATP5PD/subunit d, ATP5PO/subunit OSCP. ATP synthase complex consists of a soluble F(1) head domain (subunits alpha(3) and beta(3)) - the catalytic core - and a membrane F(0) domain - the membrane proton channel (subunits c, a, 8, e, f, g, k and j). These two domains are linked by a central stalk (subunits gamma, delta, and epsilon) rotating inside the F1 region and a stationary peripheral stalk (subunits F6, b, d, and OSCP). Interacts with DNAJC30; interaction is direct.

It is found in the mitochondrion inner membrane. It catalyses the reaction H(+)(in) = H(+)(out). Its function is as follows. Subunit a, of the mitochondrial membrane ATP synthase complex (F(1)F(0) ATP synthase or Complex V) that produces ATP from ADP in the presence of a proton gradient across the membrane which is generated by electron transport complexes of the respiratory chain. ATP synthase complex consist of a soluble F(1) head domain - the catalytic core - and a membrane F(1) domain - the membrane proton channel. These two domains are linked by a central stalk rotating inside the F(1) region and a stationary peripheral stalk. During catalysis, ATP synthesis in the catalytic domain of F(1) is coupled via a rotary mechanism of the central stalk subunits to proton translocation. With the subunit c (ATP5MC1), forms the proton-conducting channel in the F(0) domain, that contains two crucial half-channels (inlet and outlet) that facilitate proton movement from the mitochondrial intermembrane space (IMS) into the matrix. Protons are taken up via the inlet half-channel and released through the outlet half-channel, following a Grotthuss mechanism. This chain is ATP synthase F(0) complex subunit a, found in Phoca vitulina (Harbor seal).